The primary structure comprises 231 residues: tRNA (guanine-N(1)-)-methyltransferase (231 aa).

Residues Gly-112 and 132-137 each bind S-adenosyl-L-methionine; that span reads LGDFVL.

It belongs to the RNA methyltransferase TrmD family. In terms of assembly, homodimer.

Its subcellular location is the cytoplasm. It catalyses the reaction guanosine(37) in tRNA + S-adenosyl-L-methionine = N(1)-methylguanosine(37) in tRNA + S-adenosyl-L-homocysteine + H(+). Functionally, specifically methylates guanosine-37 in various tRNAs. In Gloeothece citriformis (strain PCC 7424) (Cyanothece sp. (strain PCC 7424)), this protein is tRNA (guanine-N(1)-)-methyltransferase.